A 188-amino-acid chain; its full sequence is Peptidyl-tRNA hydrolase (188 aa).

A tRNA-binding site is contributed by Y14. Residue H19 is the Proton acceptor of the active site. TRNA-binding residues include Y60 and N62.

Belongs to the PTH family. Monomer.

It localises to the cytoplasm. It catalyses the reaction an N-acyl-L-alpha-aminoacyl-tRNA + H2O = an N-acyl-L-amino acid + a tRNA + H(+). Functionally, hydrolyzes ribosome-free peptidyl-tRNAs (with 1 or more amino acids incorporated), which drop off the ribosome during protein synthesis, or as a result of ribosome stalling. In terms of biological role, catalyzes the release of premature peptidyl moieties from peptidyl-tRNA molecules trapped in stalled 50S ribosomal subunits, and thus maintains levels of free tRNAs and 50S ribosomes. The polypeptide is Peptidyl-tRNA hydrolase (Mycoplasmopsis agalactiae (strain NCTC 10123 / CIP 59.7 / PG2) (Mycoplasma agalactiae)).